A 102-amino-acid polypeptide reads, in one-letter code: NADH-quinone oxidoreductase subunit K (102 aa).

Helical transmembrane passes span 2 to 22, 26 to 46, and 58 to 78; these read LDFY…GVIL, IFTI…IFAT, and VIVM…LALI.

Belongs to the complex I subunit 4L family. In terms of assembly, NDH-1 is composed of 14 different subunits. Subunits NuoA, H, J, K, L, M, N constitute the membrane sector of the complex.

The protein localises to the cell inner membrane. The catalysed reaction is a quinone + NADH + 5 H(+)(in) = a quinol + NAD(+) + 4 H(+)(out). NDH-1 shuttles electrons from NADH, via FMN and iron-sulfur (Fe-S) centers, to quinones in the respiratory chain. The immediate electron acceptor for the enzyme in this species is believed to be ubiquinone. Couples the redox reaction to proton translocation (for every two electrons transferred, four hydrogen ions are translocated across the cytoplasmic membrane), and thus conserves the redox energy in a proton gradient. In Campylobacter fetus subsp. fetus (strain 82-40), this protein is NADH-quinone oxidoreductase subunit K.